The chain runs to 166 residues: Thioredoxin, mitochondrial (166 aa).

The transit peptide at Met-1 to Ser-59 directs the protein to the mitochondrion. One can recognise a Thioredoxin domain in the interval Thr-61–Gly-166. Active-site nucleophile residues include Cys-90 and Cys-93. Cys-90 and Cys-93 are joined by a disulfide. An N6-acetyllysine; alternate modification is found at Lys-152. Lys-152 is modified (N6-succinyllysine; alternate).

Belongs to the thioredoxin family. Monomer.

Its subcellular location is the mitochondrion. Functionally, important for the control of mitochondrial reactive oxygen species homeostasis, apoptosis regulation and cell viability. Is involved in various redox reactions including the reduction of protein disulfide bonds, through the reversible oxidation of its active center dithiol to a disulfide. The protein is Thioredoxin, mitochondrial (TXN2) of Bos taurus (Bovine).